The chain runs to 216 residues: Pyrophosphatase PpaX (216 aa).

Residue D9 is the Nucleophile of the active site.

The protein belongs to the HAD-like hydrolase superfamily. PpaX family. The cofactor is Mg(2+).

It catalyses the reaction diphosphate + H2O = 2 phosphate + H(+). Functionally, hydrolyzes pyrophosphate formed during P-Ser-HPr dephosphorylation by HPrK/P. Might play a role in controlling the intracellular pyrophosphate pool. In Bacillus cereus (strain ATCC 10987 / NRS 248), this protein is Pyrophosphatase PpaX.